The primary structure comprises 406 residues: Trk system potassium uptake protein trkA homolog 1 (406 aa).

Residues 1–124 (MKAVIIGAGE…RAQVGVDLMI (124 aa)) enclose the RCK N-terminal 1 domain. Residues 7-11 (GAGEV), Asp-29, 70-71 (TG), and Arg-101 each bind NAD(+). Residues 144–225 (IDAEMFAEGK…MEDLESVFGS (82 aa)) enclose the RCK C-terminal domain. One can recognise an RCK N-terminal 2 domain in the interval 230–348 (RTRILLIGCG…FEMVGIDMAV (119 aa)). 232–262 (RILLIGCGIVGMYLAKLIDKEENADLRIIEH) is a binding site for NAD(+).

Part of a potassium transport system. The polypeptide is Trk system potassium uptake protein trkA homolog 1 (trkA1) (Methanosarcina mazei (Methanosarcina frisia)).